The following is a 473-amino-acid chain: C3a anaphylatoxin chemotactic receptor (473 aa).

Topologically, residues 1-23 (MESFTADTNSTDLHSRPLFKPQD) are extracellular. A glycan (N-linked (GlcNAc...) asparagine) is linked at asparagine 9. A helical membrane pass occupies residues 24 to 46 (IASMVILSLTCLLGLPGNGLVLW). At 47-57 (VAGVKMKRTVN) the chain is on the cytoplasmic side. The helical transmembrane segment at 58 to 80 (TVWFLHLTLADFLCCLSLPFSVA) threads the bilayer. At 81 to 96 (HLILRGHWPYGLFLCK) the chain is on the extracellular side. Cysteine 95 and cysteine 172 are joined by a disulfide. A helical transmembrane segment spans residues 97–118 (LIPSVIILNMFASVFLLTAISL). Residues 119–139 (DRCLMVHKPIWCQNHRSVRTA) lie on the Cytoplasmic side of the membrane. A helical membrane pass occupies residues 140–160 (FAVCGCVWVVTFVMCIPVFVY). Over 161–329 (RDLLVVDDYS…TPQVAITISR (169 aa)) the chain is Extracellular. A sulfotyrosine mark is found at tyrosine 174 and tyrosine 184. N-linked (GlcNAc...) asparagine glycosylation occurs at asparagine 201. Residues 233–252 (FHTSPEDPFSQDSASQQPHY) are disordered. Position 308 is a sulfotyrosine (tyrosine 308). A helical transmembrane segment spans residues 330 to 349 (LVVGFLVPFFIMITCYSLIV). Residues 350–366 (FRMRKTNLTKSRNKTLR) lie on the Cytoplasmic side of the membrane. The helical transmembrane segment at 367-389 (VAVAVVTVFFVCWIPYHIVGILL) threads the bilayer. The Extracellular segment spans residues 390–406 (VITDQESALREVVLPWD). A helical transmembrane segment spans residues 407–427 (HMSIALASANSCFNPFLYALL). Residues 428-473 (GKDFRKKARQSVKGILEAAFSEELTHSTSCTQDKAPSKRNHMSTDV) are Cytoplasmic-facing. Serine 448 carries the phosphoserine modification. Position 452 is a phosphothreonine (threonine 452).

Belongs to the G-protein coupled receptor 1 family. Interacts with VGF-derived peptide TLQP-21.

The protein localises to the cell membrane. Functionally, receptor for the chemotactic and inflammatory peptide anaphylatoxin C3a. This receptor stimulates chemotaxis, granule enzyme release and superoxide anion production. The sequence is that of C3a anaphylatoxin chemotactic receptor (C3ar1) from Rattus norvegicus (Rat).